The primary structure comprises 155 residues: Peptidyl-prolyl cis-trans isomerase ppi1 (155 aa).

Positions Met-1–Ala-154 constitute a PPIase cyclophilin-type domain.

The protein belongs to the cyclophilin-type PPIase family. PPIL1 subfamily. Interacts with cwf13/snw1.

The catalysed reaction is [protein]-peptidylproline (omega=180) = [protein]-peptidylproline (omega=0). Functionally, PPIases accelerate the folding of proteins. It catalyzes the cis-trans isomerization of proline imidic peptide bonds in oligopeptides. The sequence is that of Peptidyl-prolyl cis-trans isomerase ppi1 (ppi1) from Schizosaccharomyces pombe (strain 972 / ATCC 24843) (Fission yeast).